The chain runs to 579 residues: Protein O-linked-mannose beta-1,4-N-acetylglucosaminyltransferase 2 (579 aa).

Residues 1–4 (MGVG) lie on the Cytoplasmic side of the membrane. Residues 5–25 (TLLNGLLVSVVAALLWKYSKL) traverse the membrane as a helical; Signal-anchor for type II membrane protein segment. Topologically, residues 26–579 (SEHAALLEEE…PFADVLMCRT (554 aa)) are lumenal. Residues Asn98, Asn275, and Asn542 are each glycosylated (N-linked (GlcNAc...) asparagine). The Fibronectin type-III domain maps to 480–579 (HPGRVRDARC…PFADVLMCRT (100 aa)).

It belongs to the glycosyltransferase 61 family.

Its subcellular location is the endoplasmic reticulum membrane. It carries out the reaction 3-O-(alpha-D-mannosyl)-L-threonyl-[protein] + UDP-N-acetyl-alpha-D-glucosamine = 3-O-(N-acetyl-beta-D-glucosaminyl-(1-&gt;4)-alpha-D-mannosyl)-L-threonyl-[protein] + UDP + H(+). It functions in the pathway protein modification; protein glycosylation. In terms of biological role, O-linked mannose beta-1,4-N-acetylglucosaminyltransferase that transfers UDP-N-acetyl-D-glucosamine to the 4-position of the mannose to generate N-acetyl-D-glucosamine-beta-1,4-O-D-mannosylprotein. Involved in the biosynthesis of the phosphorylated O-mannosyl trisaccharide (N-acetylgalactosamine-beta-3-N-acetylglucosamine-beta-4-(phosphate-6-)mannose), a carbohydrate structure present in alpha-dystroglycan (DAG1), which is required for binding laminin G-like domain-containing extracellular proteins with high affinity. In Tetraodon nigroviridis (Spotted green pufferfish), this protein is Protein O-linked-mannose beta-1,4-N-acetylglucosaminyltransferase 2 (pomgnt2).